The primary structure comprises 175 residues: Probable tail fiber assembly protein (175 aa).

Belongs to the tfa family.

In terms of biological role, acts catalytically in the formation of tail protein dimers. The chain is Probable tail fiber assembly protein (G) from Escherichia phage P2 (Bacteriophage P2).